The following is a 662-amino-acid chain: Rap guanine nucleotide exchange factor-like 1 (662 aa).

The segment at 1 to 149 (MKPLEKFLKK…PPWAPLGAPE (149 aa)) is disordered. A compositionally biased stretch (gly residues) spans 20–48 (VAGGPGGGLGSCGGPGGGGGPGGGGGPAG). A compositionally biased stretch (low complexity) spans 49–64 (GQRSLQRRQSVSRLLL). Residues 73 to 82 (AEPGLEPPVP) are compositionally biased toward pro residues. Low complexity predominate over residues 120 to 135 (LRSPSSYSSDELSPGE). The 237-residue stretch at 424–660 (EPEDVANHLT…FELSYKLEAN (237 aa)) folds into the Ras-GEF domain.

Functionally, probable guanine nucleotide exchange factor (GEF). In Homo sapiens (Human), this protein is Rap guanine nucleotide exchange factor-like 1 (RAPGEFL1).